A 371-amino-acid chain; its full sequence is Ribosomal RNA small subunit methyltransferase H (371 aa).

S-adenosyl-L-methionine contacts are provided by residues 92 to 94, Asp111, Tyr138, Asp159, and Gln166; that span reads GGH.

The protein belongs to the methyltransferase superfamily. RsmH family.

Its subcellular location is the cytoplasm. The catalysed reaction is cytidine(1402) in 16S rRNA + S-adenosyl-L-methionine = N(4)-methylcytidine(1402) in 16S rRNA + S-adenosyl-L-homocysteine + H(+). Its function is as follows. Specifically methylates the N4 position of cytidine in position 1402 (C1402) of 16S rRNA. This chain is Ribosomal RNA small subunit methyltransferase H, found in Mycolicibacterium gilvum (strain PYR-GCK) (Mycobacterium gilvum (strain PYR-GCK)).